The following is a 406-amino-acid chain: Cysteine desulfurase (406 aa).

Residue Lys226 is modified to N6-(pyridoxal phosphate)lysine. Cys364 acts as the Cysteine persulfide intermediate in catalysis.

This sequence belongs to the class-V pyridoxal-phosphate-dependent aminotransferase family. Csd subfamily. As to quaternary structure, homodimer. Interacts with SufE and the SufBCD complex composed of SufB, SufC and SufD. The interaction with SufE is required to mediate the direct transfer of the sulfur atom from the S-sulfanylcysteine. Pyridoxal 5'-phosphate is required as a cofactor.

Its subcellular location is the cytoplasm. It carries out the reaction (sulfur carrier)-H + L-cysteine = (sulfur carrier)-SH + L-alanine. It catalyses the reaction L-selenocysteine + AH2 = hydrogenselenide + L-alanine + A + H(+). It functions in the pathway cofactor biosynthesis; iron-sulfur cluster biosynthesis. Cysteine desulfurases mobilize the sulfur from L-cysteine to yield L-alanine, an essential step in sulfur metabolism for biosynthesis of a variety of sulfur-containing biomolecules. Component of the suf operon, which is activated and required under specific conditions such as oxidative stress and iron limitation. Acts as a potent selenocysteine lyase in vitro, that mobilizes selenium from L-selenocysteine. Selenocysteine lyase activity is however unsure in vivo. The polypeptide is Cysteine desulfurase (Serratia proteamaculans (strain 568)).